A 690-amino-acid chain; its full sequence is MPWEEPAGEKPSCSHSQKAFHMEPAQKPCFTTDMVTWALLCISAETVRGEAPSQPRGIPHRSPVSVDDLWLEKTQRKKLQKQAHVERRLHIGAVHKDGVKCWRKTIITSPESLNLPRRSHPLSQSAPTGLNHMGWPEHTPGTAMPDGALDTAVCADEVGSEEDLYDDLHSSSHHYSHPGGGGEQLAINELISDGSVVCAEALWDHVTMDDQELGFKAGDVIEVMDATNREWWWGRVADGEGWFPASFVRLRVNQDEPADDDAPLAGNSGAEDGGAEAQSSKDQMRTNVINEILSTERDYIKHLRDICEGYVRQCRKRADMFSEEQLRTIFGNIEDIYRCQKAFVKALEQRFNRERPHLSELGACFLEHQADFQIYSEYCNNHPNACVELSRLTKLSKYVYFFEACRLLQKMIDISLDGFLLTPVQKICKYPLQLAELLKYTHPQHRDFKDVEAALHAMKNVAQLINERKRRLENIDKIAQWQSSIEDWEGEDLLVRSSELIYSGELTRVTQPQAKSQQRMFFLFDHQLIYCKKDLLRRDVLYYKGRLDMDGLEVVDLEDGKDRDLHVSIKNAFRLHRGATGDSHLLCTRKPEQKQRWLKAFAREREQVQLDQETGFSITELQRKQAMLNASKQQVTGKPKAVGRPCYLTRQKHPALPSNRPQQQVLVLAEPRRKPSTFWHSISRLAPFRK.

The tract at residues 73–126 (KTQRKKLQKQAHVERRLHIGAVHKDGVKCWRKTIITSPESLNLPRRSHPLSQSA) is ABR (APC-binding region) domain. Residues 113 to 145 (LNLPRRSHPLSQSAPTGLNHMGWPEHTPGTAMP) are disordered. Residues 194–253 (GSVVCAEALWDHVTMDDQELGFKAGDVIEVMDATNREWWWGRVADGEGWFPASFVRLRVN) enclose the SH3 domain. A disordered region spans residues 257–282 (PADDDAPLAGNSGAEDGGAEAQSSKD). Residues 284–468 (MRTNVINEIL…KNVAQLINER (185 aa)) form the DH domain. The 108-residue stretch at 499–606 (ELIYSGELTR…WLKAFARERE (108 aa)) folds into the PH domain.

Isoform 3 interacts with RHOA and RAC1, and (via ABR domain) with APC. Found in a complex consisting of ARHGEF4, APC and CTNNB1. In terms of tissue distribution, expressed at high levels in the brain, skeletal muscle and testis and at low levels in the kidney, lung, small intestine, ovary and prostate. Expression is aberrantly enhanced in most colorectal tumors.

It is found in the cytoplasm. It localises to the cell projection. The protein localises to the ruffle membrane. Functionally, acts as a guanine nucleotide exchange factor (GEF) for RHOA, RAC1 and CDC42 GTPases. Binding of APC may activate RAC1 GEF activity. The APC-ARHGEF4 complex seems to be involved in cell migration as well as in E-cadherin-mediated cell-cell adhesion. Required for MMP9 up-regulation via the JNK signaling pathway in colorectal tumor cells. Involved in tumor angiogenesis and may play a role in intestinal adenoma formation and tumor progression. The protein is Rho guanine nucleotide exchange factor 4 (ARHGEF4) of Homo sapiens (Human).